Consider the following 317-residue polypeptide: Peroxidase 64 (317 aa).

The signal sequence occupies residues 1–22; it reads MNAHMLNLLVIVIFVVSFDVQA. Intrachain disulfides connect cysteine 32–cysteine 111, cysteine 65–cysteine 70, cysteine 117–cysteine 313, and cysteine 195–cysteine 227. Histidine 63 (proton acceptor) is an active-site residue. Ca(2+) is bound by residues aspartate 64, valine 67, glycine 69, aspartate 71, and serine 73. Substrate is bound at residue proline 158. The N-linked (GlcNAc...) asparagine glycan is linked to asparagine 163. Residue histidine 188 coordinates heme b. Residue threonine 189 coordinates Ca(2+). The Ca(2+) site is built by aspartate 241, threonine 243, and aspartate 248.

The protein belongs to the peroxidase family. Classical plant (class III) peroxidase subfamily. It depends on heme b as a cofactor. Ca(2+) serves as cofactor. As to expression, expressed in the whole plant, but preferentially in roots.

The protein localises to the secreted. It catalyses the reaction 2 a phenolic donor + H2O2 = 2 a phenolic radical donor + 2 H2O. Functionally, removal of H(2)O(2), oxidation of toxic reductants, biosynthesis and degradation of lignin, suberization, auxin catabolism, response to environmental stresses such as wounding, pathogen attack and oxidative stress. These functions might be dependent on each isozyme/isoform in each plant tissue. In Arabidopsis thaliana (Mouse-ear cress), this protein is Peroxidase 64 (PER64).